A 604-amino-acid chain; its full sequence is Sulfite reductase [NADPH] flavoprotein alpha-component (604 aa).

The 139-residue stretch at Leu68–Leu206 folds into the Flavodoxin-like domain. FMN is bound by residues Ser74–Ala79, Ser121–Gly124, and Leu157–Cys166. Positions Gln239 to Pro453 constitute an FAD-binding FR-type domain. FAD-binding positions include Thr327, Gly361, Arg391–Ser394, Thr409–Gly411, Tyr415, and Gly424–Ser427. NADP(+)-binding positions include Ser524–Arg525, Lys530–Gln534, and Asp566. Tyr604 contacts FAD.

It belongs to the NADPH-dependent sulphite reductase flavoprotein subunit CysJ family. In the N-terminal section; belongs to the flavodoxin family. The protein in the C-terminal section; belongs to the flavoprotein pyridine nucleotide cytochrome reductase family. As to quaternary structure, alpha(8)-beta(8). The alpha component is a flavoprotein, the beta component is a hemoprotein. Requires FAD as cofactor. The cofactor is FMN.

The catalysed reaction is hydrogen sulfide + 3 NADP(+) + 3 H2O = sulfite + 3 NADPH + 4 H(+). It participates in sulfur metabolism; hydrogen sulfide biosynthesis; hydrogen sulfide from sulfite (NADPH route): step 1/1. Its function is as follows. Component of the sulfite reductase complex that catalyzes the 6-electron reduction of sulfite to sulfide. This is one of several activities required for the biosynthesis of L-cysteine from sulfate. The flavoprotein component catalyzes the electron flow from NADPH -&gt; FAD -&gt; FMN to the hemoprotein component. The sequence is that of Sulfite reductase [NADPH] flavoprotein alpha-component from Aliivibrio fischeri (strain ATCC 700601 / ES114) (Vibrio fischeri).